Here is a 235-residue protein sequence, read N- to C-terminus: Sugar fermentation stimulation protein homolog (235 aa).

The protein belongs to the SfsA family.

This is Sugar fermentation stimulation protein homolog from Alkaliphilus oremlandii (strain OhILAs) (Clostridium oremlandii (strain OhILAs)).